Consider the following 434-residue polypeptide: Probable G-protein coupled receptor B0563.6 (434 aa).

Residue Asn-12 is glycosylated (N-linked (GlcNAc...) asparagine). 2 helical membrane-spanning segments follow: residues 30-50 and 65-85; these read VLPC…MVLA and LAVA…TEYL. N-linked (GlcNAc...) asparagine glycosylation occurs at Asn-88. Transmembrane regions (helical) follow at residues 105 to 125 and 147 to 167; these read LMLT…VALS and ATRA…PYAI. A glycan (N-linked (GlcNAc...) asparagine) is linked at Asn-181. 2 consecutive transmembrane segments (helical) span residues 208–228 and 258–278; these read ILRF…MIAF and GGTV…LLLI. Residues Asn-429 and Asn-430 are each glycosylated (N-linked (GlcNAc...) asparagine).

The protein belongs to the G-protein coupled receptor 1 family.

Its subcellular location is the cell membrane. Its function is as follows. Not known. Putative receptor. In Caenorhabditis elegans, this protein is Probable G-protein coupled receptor B0563.6.